The chain runs to 124 residues: MRDSPTHKEQRAQNTMSDQMPFPFNNFTYFFTLFSKFFSSFHHCTCSLSVSRQYLALDGIYHPLRAAFPNNSTLRRHFTKNRTPRHTGFSPSMTSCSKEHRQGTAPKLPSPNYNSGTEGTRFQI.

The interval 80–124 (KNRTPRHTGFSPSMTSCSKEHRQGTAPKLPSPNYNSGTEGTRFQI) is disordered. A compositionally biased stretch (polar residues) spans 111–124 (PNYNSGTEGTRFQI).

Its subcellular location is the mitochondrion. May be involved in mtDNA stability or mitochondrial gene expression regulation at the post-transcriptional level. This Saccharomyces cerevisiae (strain ATCC 204508 / S288c) (Baker's yeast) protein is Protein TAR1 (TAR1).